The following is a 999-amino-acid chain: Sarcoplasmic/endoplasmic reticulum calcium ATPase 3 (999 aa).

The Cytoplasmic segment spans residues 1–48 (MEAAHSVPVQDVLSRFGVAESCGLSPEQVRRNREKYGPNELPAEERKS). Residues 49–69 (LWELVLEQFEDLLVRILLMAA) form a helical membrane-spanning segment. Over 70–89 (FLSFILAWFEEGEESTTAFV) the chain is Lumenal. A helical transmembrane segment spans residues 90-110 (EPIVIIMILIANAVVGVWQER). At 111 to 253 (NAESAIEALK…PEKTPLQQKL (143 aa)) the chain is on the cytoplasmic side. The helical transmembrane segment at 254–273 (DEFSQQLSKVIFLVCIAVWV) threads the bilayer. Topologically, residues 274–295 (INISHFSDPVHGGSWFRGAIYY) are lumenal. A helical membrane pass occupies residues 296–313 (FKTSVALAVAAIPEGLPA). Ca(2+)-binding residues include valine 304, alanine 305, isoleucine 307, and glutamate 309. Residues 314 to 757 (VITTCLALGT…EEGRAIYNNM (444 aa)) are Cytoplasmic-facing. The active-site 4-aspartylphosphate intermediate is the aspartate 351. The Mg(2+) site is built by aspartate 351 and threonine 353. An ATP-binding site is contributed by threonine 353. The tract at residues 370–400 (EKVEGTQCSLHEFSITGSTYAPEGQILKDEK) is interaction with phospholamban 1. Glutamate 442, arginine 489, lysine 515, arginine 560, threonine 625, glycine 626, aspartate 627, arginine 678, and lysine 684 together coordinate ATP. Aspartate 703 lines the Mg(2+) pocket. Asparagine 706 is an ATP binding site. A helical membrane pass occupies residues 758 to 777 (KQFIRYLISSNVGEVVCIFL). Ca(2+) contacts are provided by asparagine 768 and glutamate 771. Topologically, residues 778–787 (TAILGLPEAL) are lumenal. Residues 788-808 (IPVQLLWVNLVTDGLPATALG) traverse the membrane as a helical segment. Residues 788-808 (IPVQLLWVNLVTDGLPATALG) are interaction with phospholamban 2. Positions 796, 799, and 800 each coordinate Ca(2+). Topologically, residues 809–828 (FNPPDLDIMDKLPRNPKEPL) are cytoplasmic. The chain crosses the membrane as a helical span at residues 829 to 851 (ISGWLFFRYLAIGVYVGLATVGA). Topologically, residues 852–897 (ATWWFLYDAEGPQVSFHQLRNFMRCTEDNPIFEGVNCEIFESRYPT) are lumenal. A helical membrane pass occupies residues 898 to 917 (TMALSVLVTIEMCNALNSVS). Glutamate 908 serves as a coordination point for Ca(2+). Topologically, residues 918–930 (ENQSLLRMPPWLN) are cytoplasmic. The chain crosses the membrane as a helical span at residues 931–949 (IWLLGAIVMSMALHFFILY). Over 950-964 (VKPMPLIFQVTPLSW) the chain is Lumenal. Residues 965–985 (PQWVVVLKISLPVILLDEGLK) traverse the membrane as a helical segment. Over 986–999 (YLSRNHLEGEEDKK) the chain is Cytoplasmic.

The protein belongs to the cation transport ATPase (P-type) (TC 3.A.3) family. Type IIA subfamily. As to quaternary structure, interacts with sarcolipin (SLN). Interacts with phospholamban (PLN). Interacts with myoregulin (MRLN). Interacts with DWORF. Mg(2+) serves as cofactor. In terms of tissue distribution, found in spleen, lung, intestine and brain.

Its subcellular location is the endoplasmic reticulum membrane. It localises to the sarcoplasmic reticulum membrane. The enzyme catalyses Ca(2+)(in) + ATP + H2O = Ca(2+)(out) + ADP + phosphate + H(+). Its activity is regulated as follows. Inhibited by sarcolipin (SLN), phospholamban (PLN) and myoregulin (MRLN). Enhanced by DWORF; DWORF increases activity by displacing sarcolipin (SLN), phospholamban (PLN) and myoregulin (MRLN). Its function is as follows. This magnesium-dependent enzyme catalyzes the hydrolysis of ATP coupled with the transport of calcium. Transports calcium ions from the cytosol into the sarcoplasmic/endoplasmic reticulum lumen. Contributes to calcium sequestration involved in muscular excitation/contraction. This Gallus gallus (Chicken) protein is Sarcoplasmic/endoplasmic reticulum calcium ATPase 3 (ATP2A3).